A 308-amino-acid chain; its full sequence is HTH-type transcriptional regulator SsuR (308 aa).

The 59-residue stretch at 1–59 (MNFQQLRFVREAVRQNMNLTEVANVLYTSQSGVSKQIKDLEDELGVDIFIRRGKRLTGL) folds into the HTH lysR-type domain. The H-T-H motif DNA-binding region spans 19–38 (LTEVANVLYTSQSGVSKQIK).

This sequence belongs to the LysR transcriptional regulatory family.

Functionally, transcriptional regulator that is essential for the utilization of a number of organic sulfur sources of either environmental or human origin. Required for aliphatic sulfonate utilization. Binds to DNA at target promoter regions. Targets include the ssuDBC operon, the tauABC operon, three tauD-type genes and atsA. The sequence is that of HTH-type transcriptional regulator SsuR from Burkholderia cenocepacia (strain ATCC BAA-245 / DSM 16553 / LMG 16656 / NCTC 13227 / J2315 / CF5610) (Burkholderia cepacia (strain J2315)).